A 163-amino-acid chain; its full sequence is 6,7-dimethyl-8-ribityllumazine synthase (163 aa).

5-amino-6-(D-ribitylamino)uracil is bound by residues Phe27, 58-60 (ALE), and 87-89 (CVV). 92–93 (DT) contributes to the (2S)-2-hydroxy-3-oxobutyl phosphate binding site. Catalysis depends on His95, which acts as the Proton donor. Asn120 contacts 5-amino-6-(D-ribitylamino)uracil. A (2S)-2-hydroxy-3-oxobutyl phosphate-binding site is contributed by Arg134.

The protein belongs to the DMRL synthase family.

It carries out the reaction (2S)-2-hydroxy-3-oxobutyl phosphate + 5-amino-6-(D-ribitylamino)uracil = 6,7-dimethyl-8-(1-D-ribityl)lumazine + phosphate + 2 H2O + H(+). Its pathway is cofactor biosynthesis; riboflavin biosynthesis; riboflavin from 2-hydroxy-3-oxobutyl phosphate and 5-amino-6-(D-ribitylamino)uracil: step 1/2. Functionally, catalyzes the formation of 6,7-dimethyl-8-ribityllumazine by condensation of 5-amino-6-(D-ribitylamino)uracil with 3,4-dihydroxy-2-butanone 4-phosphate. This is the penultimate step in the biosynthesis of riboflavin. The sequence is that of 6,7-dimethyl-8-ribityllumazine synthase from Nitrobacter winogradskyi (strain ATCC 25391 / DSM 10237 / CIP 104748 / NCIMB 11846 / Nb-255).